Consider the following 149-residue polypeptide: Lymphocyte antigen 6 complex locus protein G5c (149 aa).

The N-terminal stretch at 1 to 41 (MLFMAGPAASWSLRPLGLHGVPQALCAVLLTVLVMKTLVLG) is a signal peptide. A UPAR/Ly6 domain is found at 59 to 149 (LNCYRCLLET…NPDNRKNSMH (91 aa)). Cystine bridges form between cysteine 61–cysteine 88, cysteine 64–cysteine 73, cysteine 80–cysteine 106, cysteine 115–cysteine 132, and cysteine 133–cysteine 138. N-linked (GlcNAc...) asparagine glycosylation occurs at asparagine 95.

In terms of assembly, forms oligomers. In terms of processing, N-glycosylated. In terms of tissue distribution, detected in adult brain.

It localises to the secreted. May have a role in hematopoietic cell differentiation. The chain is Lymphocyte antigen 6 complex locus protein G5c (Ly6g5c) from Mus musculus (Mouse).